Here is a 133-residue protein sequence, read N- to C-terminus: Small ribosomal subunit protein uS8 (133 aa).

This sequence belongs to the universal ribosomal protein uS8 family. As to quaternary structure, part of the 30S ribosomal subunit. Contacts proteins S5 and S12.

Functionally, one of the primary rRNA binding proteins, it binds directly to 16S rRNA central domain where it helps coordinate assembly of the platform of the 30S subunit. The chain is Small ribosomal subunit protein uS8 from Prochlorococcus marinus (strain MIT 9313).